Here is a 95-residue protein sequence, read N- to C-terminus: Co-chaperonin GroES (95 aa).

The protein belongs to the GroES chaperonin family. As to quaternary structure, heptamer of 7 subunits arranged in a ring. Interacts with the chaperonin GroEL.

It is found in the cytoplasm. Its function is as follows. Together with the chaperonin GroEL, plays an essential role in assisting protein folding. The GroEL-GroES system forms a nano-cage that allows encapsulation of the non-native substrate proteins and provides a physical environment optimized to promote and accelerate protein folding. GroES binds to the apical surface of the GroEL ring, thereby capping the opening of the GroEL channel. The polypeptide is Co-chaperonin GroES (Clostridium acetobutylicum (strain ATCC 824 / DSM 792 / JCM 1419 / IAM 19013 / LMG 5710 / NBRC 13948 / NRRL B-527 / VKM B-1787 / 2291 / W)).